A 456-amino-acid polypeptide reads, in one-letter code: MGSGHYFWAILYFASLCSASLANNAKINFREKEKKVLDQILGAGKYDARIRPSGINGTDGPAIVRINLFVRSIMTISDIKMEYSVQLTFREQWTDERLKFDDIQGRLKYLTLTEANRVWMPDLFFSNEKEGHFHNIIMPNVYIRIFPNGSVLYSIRISLTLACPMNLKLYPLDRQICSLRMASYGWTTNDLVFLWKEGDPVQVVKNLHLPRFTLEKFLTDYCNSKTNTGEYSCLKVDLLFKREFSYYLIQIYIPCCMLVIVSWVSFWLDQGAVPARVSLGVTTLLTMATQTSGINASLPPVSYTKAIDVWTGVCLTFVFGALLEFALVNYASRSGSNKANMHKESMKKKRRDLEQASLDAASDLLDTDSNATFAMKPLVRHPGDPLALEKRLQCEVHMQAPKRPNCCKTWLSKFPTRQCSRSKRIDVISRITFPLVFALFNLVYWSTYLFREEEDE.

A signal peptide spans 1 to 22; it reads MGSGHYFWAILYFASLCSASLA. The Extracellular segment spans residues 23-245; that stretch reads NNAKINFREK…VDLLFKREFS (223 aa). Residues Arg-71, Arg-90, and Ser-154 each coordinate L-glutamate. Cys-163 and Cys-177 are joined by a disulfide. L-glutamate is bound at residue Ser-183. A disulfide bridge connects residues Cys-222 and Cys-233. A helical transmembrane segment spans residues 246–268; sequence YYLIQIYIPCCMLVIVSWVSFWL. At 269-273 the chain is on the cytoplasmic side; it reads DQGAV. Residues 274–295 form a helical membrane-spanning segment; sequence PARVSLGVTTLLTMATQTSGIN. Residues 296–302 are Extracellular-facing; it reads ASLPPVS. The helical transmembrane segment at 303 to 323 threads the bilayer; the sequence is YTKAIDVWTGVCLTFVFGALL. At 324 to 426 the chain is on the cytoplasmic side; the sequence is EFALVNYASR…RQCSRSKRID (103 aa). A helical membrane pass occupies residues 427–450; that stretch reads VISRITFPLVFALFNLVYWSTYLF. Over 451 to 456 the chain is Extracellular; the sequence is REEEDE.

This sequence belongs to the ligand-gated ion channel (TC 1.A.9) family. Glutamate-gated chloride channel (TC 1.A.9.4) subfamily. In terms of assembly, pentamer. Homomultimer. As to expression, expressed in the medulla layers (at protein level). Expressed in all major ON pathway medulla neurons (Mi1, Tm3, Mi4, and Mi9) and in OFF pathway neurons (Tm1, Tm2, Tm4, and Tm9).

It localises to the postsynaptic cell membrane. Its subcellular location is the cell membrane. With respect to regulation, glutamate binding triggers a rapidly reversible current, while the anti-helmintic drug ivermectin triggers a permanently open channel configuration. Inhibited by picrotoxin. In terms of biological role, glutamate-gated chloride channel subunit. Together with Gamma-aminobutyric acid receptor Rdl, plays an important role in the visual response by regulating the activity of ON/OFF-selective neurons. This chain is Glutamate-gated chloride channel (GluClalpha), found in Drosophila melanogaster (Fruit fly).